Reading from the N-terminus, the 466-residue chain is Cysteine--tRNA ligase (466 aa).

Zn(2+) is bound at residue cysteine 29. The short motif at alanine 31 to histidine 41 is the 'HIGH' region element. 3 residues coordinate Zn(2+): cysteine 208, histidine 233, and glutamate 237. The 'KMSKS' region signature appears at lysine 264–serine 268. An ATP-binding site is contributed by lysine 267.

It belongs to the class-I aminoacyl-tRNA synthetase family. In terms of assembly, monomer. The cofactor is Zn(2+).

It localises to the cytoplasm. It catalyses the reaction tRNA(Cys) + L-cysteine + ATP = L-cysteinyl-tRNA(Cys) + AMP + diphosphate. The protein is Cysteine--tRNA ligase of Streptomyces griseus subsp. griseus (strain JCM 4626 / CBS 651.72 / NBRC 13350 / KCC S-0626 / ISP 5235).